We begin with the raw amino-acid sequence, 476 residues long: Aspartyl/glutamyl-tRNA(Asn/Gln) amidotransferase subunit B (476 aa).

The protein belongs to the GatB/GatE family. GatB subfamily. As to quaternary structure, heterotrimer of A, B and C subunits.

The catalysed reaction is L-glutamyl-tRNA(Gln) + L-glutamine + ATP + H2O = L-glutaminyl-tRNA(Gln) + L-glutamate + ADP + phosphate + H(+). It carries out the reaction L-aspartyl-tRNA(Asn) + L-glutamine + ATP + H2O = L-asparaginyl-tRNA(Asn) + L-glutamate + ADP + phosphate + 2 H(+). Allows the formation of correctly charged Asn-tRNA(Asn) or Gln-tRNA(Gln) through the transamidation of misacylated Asp-tRNA(Asn) or Glu-tRNA(Gln) in organisms which lack either or both of asparaginyl-tRNA or glutaminyl-tRNA synthetases. The reaction takes place in the presence of glutamine and ATP through an activated phospho-Asp-tRNA(Asn) or phospho-Glu-tRNA(Gln). This is Aspartyl/glutamyl-tRNA(Asn/Gln) amidotransferase subunit B from Thermosipho melanesiensis (strain DSM 12029 / CIP 104789 / BI429).